Consider the following 1060-residue polypeptide: Isoleucine--tRNA ligase (1060 aa).

A 'HIGH' region motif is present at residues 55-65; sequence PTANGTPGVHH. Residues 608–612 carry the 'KMSKS' region motif; that stretch reads KMSKH. K611 contributes to the ATP binding site.

It belongs to the class-I aminoacyl-tRNA synthetase family. IleS type 2 subfamily. Monomer. The cofactor is Zn(2+).

Its subcellular location is the cytoplasm. It catalyses the reaction tRNA(Ile) + L-isoleucine + ATP = L-isoleucyl-tRNA(Ile) + AMP + diphosphate. Its function is as follows. Catalyzes the attachment of isoleucine to tRNA(Ile). As IleRS can inadvertently accommodate and process structurally similar amino acids such as valine, to avoid such errors it has two additional distinct tRNA(Ile)-dependent editing activities. One activity is designated as 'pretransfer' editing and involves the hydrolysis of activated Val-AMP. The other activity is designated 'posttransfer' editing and involves deacylation of mischarged Val-tRNA(Ile). In Thermobifida fusca (strain YX), this protein is Isoleucine--tRNA ligase.